A 102-amino-acid polypeptide reads, in one-letter code: Large ribosomal subunit protein bL21 (102 aa).

This sequence belongs to the bacterial ribosomal protein bL21 family. Part of the 50S ribosomal subunit. Contacts protein L20.

Its function is as follows. This protein binds to 23S rRNA in the presence of protein L20. In Zymomonas mobilis subsp. mobilis (strain ATCC 31821 / ZM4 / CP4), this protein is Large ribosomal subunit protein bL21.